A 421-amino-acid chain; its full sequence is MASSGLGNGVGTSRSAKGLKSSSSSVDWLTRDLAETRIRDKVETDDERDSEPDIIDGAGAEPGHVIRTTLRGRNGQSRQTVSYISEHVVGTGSFGMVFQAKCRETGEVVAIKKVLQDKRYKNRELQIMQMLDHPNAVALKHSFFSRTDNEEVYLNLVLEFVPETVNRVARSYSRTNQLMPLIYVKLYTYQICRALAYIHNSFGLCHRDIKPQNLLVNPHTHQLKICDFGSAKVLVKGEPNVSYICSRYYRAPELIFGASEYTTAIDIWSTGCVMAELLLGQPLFPGESGVDQLVEIIKVLGTPTREEIKCMNPNYTEFKFPQIKPHPWHKVFQKRLPPEAVDLLCRFFQYSPNLRCTALEACIHPLFDELRDPNTRLPNGRPLPPLFNFKPQELSGIPPEIVNRLVPEHARKQNLFMALHS.

The span at 1–10 (MASSGLGNGV) shows a compositional bias: gly residues. Residues 1–60 (MASSGLGNGVGTSRSAKGLKSSSSSVDWLTRDLAETRIRDKVETDDERDSEPDIIDGAGA) form a disordered region. A compositionally biased stretch (basic and acidic residues) spans 29–42 (LTRDLAETRIRDKV). The segment covering 43 to 54 (ETDDERDSEPDI) has biased composition (acidic residues). One can recognise a Protein kinase domain in the interval 83-367 (YISEHVVGTG…ALEACIHPLF (285 aa)). ATP contacts are provided by residues 89–97 (VGTGSFGMV) and Lys112. The active-site Proton acceptor is the Asp208. Tyr243 carries the post-translational modification Phosphotyrosine.

Belongs to the protein kinase superfamily. CMGC Ser/Thr protein kinase family. GSK-3 subfamily. In terms of processing, autophosphorylated mainly on threonine and serine residues. As to expression, expressed exclusively in inflorescences.

It carries out the reaction L-seryl-[protein] + ATP = O-phospho-L-seryl-[protein] + ADP + H(+). The enzyme catalyses L-threonyl-[protein] + ATP = O-phospho-L-threonyl-[protein] + ADP + H(+). In terms of biological role, may mediate extracellular signals to regulate transcription in differentiating cells. The sequence is that of Shaggy-related protein kinase kappa (ASK10) from Arabidopsis thaliana (Mouse-ear cress).